We begin with the raw amino-acid sequence, 142 residues long: Large ribosomal subunit protein uL11 (142 aa).

Belongs to the universal ribosomal protein uL11 family. Part of the ribosomal stalk of the 50S ribosomal subunit. Interacts with L10 and the large rRNA to form the base of the stalk. L10 forms an elongated spine to which L12 dimers bind in a sequential fashion forming a multimeric L10(L12)X complex. Post-translationally, one or more lysine residues are methylated.

Functionally, forms part of the ribosomal stalk which helps the ribosome interact with GTP-bound translation factors. The chain is Large ribosomal subunit protein uL11 from Gamma-proteobacterium EBAC31A08.